A 219-amino-acid polypeptide reads, in one-letter code: Endonuclease V (219 aa).

2 residues coordinate Mg(2+): aspartate 41 and aspartate 107.

Belongs to the endonuclease V family. The cofactor is Mg(2+).

It is found in the cytoplasm. The enzyme catalyses Endonucleolytic cleavage at apurinic or apyrimidinic sites to products with a 5'-phosphate.. DNA repair enzyme involved in the repair of deaminated bases. Selectively cleaves double-stranded DNA at the second phosphodiester bond 3' to a deoxyinosine leaving behind the intact lesion on the nicked DNA. The polypeptide is Endonuclease V (Desulfurococcus amylolyticus (strain DSM 18924 / JCM 16383 / VKM B-2413 / 1221n) (Desulfurococcus kamchatkensis)).